Here is a 476-residue protein sequence, read N- to C-terminus: Inosine-5'-monophosphate dehydrogenase (476 aa).

2 consecutive CBS domains span residues 92 to 150 (MIEN…IADV) and 151 to 207 (MTKD…PNAS). NAD(+) contacts are provided by residues aspartate 244 and 294–296 (GVG). Residues glycine 296 and glycine 298 each contribute to the K(+) site. IMP is bound at residue serine 299. K(+) is bound at residue cysteine 301. The active-site Thioimidate intermediate is cysteine 301. Residues 334–336 (DGG), 357–358 (GS), 381–385 (YRGMA), and glutamate 413 contribute to the IMP site. The K(+) site is built by glutamate 467 and serine 468.

The protein belongs to the IMPDH/GMPR family. Homotetramer. K(+) is required as a cofactor.

It catalyses the reaction IMP + NAD(+) + H2O = XMP + NADH + H(+). It functions in the pathway purine metabolism; XMP biosynthesis via de novo pathway; XMP from IMP: step 1/1. Mycophenolic acid (MPA) is a non-competitive inhibitor that prevents formation of the closed enzyme conformation by binding to the same site as the amobile flap. In contrast, mizoribine monophosphate (MZP) is a competitive inhibitor that induces the closed conformation. MPA is a potent inhibitor of mammalian IMPDHs but a poor inhibitor of the bacterial enzymes. MZP is a more potent inhibitor of bacterial IMPDH. Its function is as follows. Catalyzes the conversion of inosine 5'-phosphate (IMP) to xanthosine 5'-phosphate (XMP), the first committed and rate-limiting step in the de novo synthesis of guanine nucleotides, and therefore plays an important role in the regulation of cell growth. This is Inosine-5'-monophosphate dehydrogenase from Nitrosopumilus maritimus (strain SCM1).